The chain runs to 339 residues: MYTLARQLLFKLSPETSHDLSLDLIGAGGRLGLNGLLCKAPAQMPVKVMGLEFANPVGLAAGLDKNGAAIDGFAQLGFGFVEIGTVTPRPQPGNPKPRIFRLPQAEAIINRMGFNNLGVDNLLARVAASQYKGVLGINIGKNFDTPVERAVDDYLICLDKVYAHASYVTVNVSSPNTPGLRSLQFGESLKQLLAALSQRQQELTAIHGKRVPLAIKIAPDMSDEETVEVARALLETGMDAVIATNTTLSREGVEGLEHGAEAGGLSGAPVREKSTHTVKVLAAELAGRLPIIAVGGITEGKHAAEKIAAGASLVQLYSGFIYKGPALIRESVDAIAAMG.

Residues 61–65 and Thr85 contribute to the FMN site; that span reads AGLDK. Position 65 (Lys65) interacts with substrate. Residue 110 to 114 coordinates substrate; that stretch reads NRMGF. FMN-binding residues include Asn138 and Asn171. Asn171 is a binding site for substrate. The Nucleophile role is filled by Ser174. Asn176 contributes to the substrate binding site. 2 residues coordinate FMN: Lys216 and Thr244. 245–246 contributes to the substrate binding site; the sequence is NT. FMN is bound by residues Gly267, Gly296, and 317–318; that span reads YS.

This sequence belongs to the dihydroorotate dehydrogenase family. Type 2 subfamily. As to quaternary structure, monomer. Requires FMN as cofactor.

It localises to the cell membrane. The enzyme catalyses (S)-dihydroorotate + a quinone = orotate + a quinol. Its pathway is pyrimidine metabolism; UMP biosynthesis via de novo pathway; orotate from (S)-dihydroorotate (quinone route): step 1/1. Its function is as follows. Catalyzes the conversion of dihydroorotate to orotate with quinone as electron acceptor. This chain is Dihydroorotate dehydrogenase (quinone), found in Pseudomonas fluorescens (strain ATCC BAA-477 / NRRL B-23932 / Pf-5).